The following is a 333-amino-acid chain: Methionyl-tRNA formyltransferase (333 aa).

A (6S)-5,6,7,8-tetrahydrofolate-binding site is contributed by 106 to 109 (SLLP).

The protein belongs to the Fmt family.

The catalysed reaction is L-methionyl-tRNA(fMet) + (6R)-10-formyltetrahydrofolate = N-formyl-L-methionyl-tRNA(fMet) + (6S)-5,6,7,8-tetrahydrofolate + H(+). In terms of biological role, attaches a formyl group to the free amino group of methionyl-tRNA(fMet). The formyl group appears to play a dual role in the initiator identity of N-formylmethionyl-tRNA by promoting its recognition by IF2 and preventing the misappropriation of this tRNA by the elongation apparatus. The polypeptide is Methionyl-tRNA formyltransferase (Elusimicrobium minutum (strain Pei191)).